A 477-amino-acid chain; its full sequence is Glycogen synthase (477 aa).

Lysine 16 serves as a coordination point for ADP-alpha-D-glucose.

This sequence belongs to the glycosyltransferase 1 family. Bacterial/plant glycogen synthase subfamily.

The enzyme catalyses [(1-&gt;4)-alpha-D-glucosyl](n) + ADP-alpha-D-glucose = [(1-&gt;4)-alpha-D-glucosyl](n+1) + ADP + H(+). It participates in glycan biosynthesis; glycogen biosynthesis. Its function is as follows. Synthesizes alpha-1,4-glucan chains using ADP-glucose. This is Glycogen synthase from Oceanobacillus iheyensis (strain DSM 14371 / CIP 107618 / JCM 11309 / KCTC 3954 / HTE831).